Consider the following 443-residue polypeptide: Endoplasmic reticulum protein SC65 (443 aa).

An N-terminal signal peptide occupies residues 1 to 18 (MARAAWGLLWLLLGSAGA). Residues 81–102 (SGPATSQPRPAPGPDGDNEGDG) are disordered. A glycan (N-linked (GlcNAc...) asparagine) is linked at Asn367. Acidic residues-rich tracts occupy residues 387–398 (DEMELEETESLP), 407–419 (AEFEGEGDYEEGL), and 431–443 (GDEDEAEPEPELA). The disordered stretch occupies residues 387–443 (DEMELEETESLPEPEKPLSDAEFEGEGDYEEGLYADWWQEPDAKGDEDEAEPEPELA).

Belongs to the leprecan family. As to quaternary structure, interacts with PLOD1, P3H3 and PPIB. Identified in a complex with PLOD1 and P3H3. Found in testis, brain, heart and at a much lower level in liver.

It is found in the endoplasmic reticulum. In terms of biological role, part of a complex composed of PLOD1, P3H3 and P3H4 that catalyzes hydroxylation of lysine residues in collagen alpha chains and is required for normal assembly and cross-linking of collagen fibrils. Required for normal bone density and normal skin stability via its role in hydroxylation of lysine residues in collagen alpha chains and in collagen fibril assembly. The protein is Endoplasmic reticulum protein SC65 of Rattus norvegicus (Rat).